The following is a 132-amino-acid chain: Small ribosomal subunit protein uS11 (132 aa).

The protein belongs to the universal ribosomal protein uS11 family. Part of the 30S ribosomal subunit. Interacts with proteins S7 and S18. Binds to IF-3.

In terms of biological role, located on the platform of the 30S subunit, it bridges several disparate RNA helices of the 16S rRNA. Forms part of the Shine-Dalgarno cleft in the 70S ribosome. The chain is Small ribosomal subunit protein uS11 from Chlamydia muridarum (strain MoPn / Nigg).